The following is a 158-amino-acid chain: Phosphopantetheine adenylyltransferase (158 aa).

A substrate-binding site is contributed by T9. Residues 9–10 and H17 contribute to the ATP site; that span reads TF. K41, L73, and R87 together coordinate substrate. ATP contacts are provided by residues 88–90, E98, and 123–129; these read GVR and WSYVSST.

Belongs to the bacterial CoaD family. Homohexamer. Mg(2+) serves as cofactor.

It localises to the cytoplasm. The enzyme catalyses (R)-4'-phosphopantetheine + ATP + H(+) = 3'-dephospho-CoA + diphosphate. It functions in the pathway cofactor biosynthesis; coenzyme A biosynthesis; CoA from (R)-pantothenate: step 4/5. Functionally, reversibly transfers an adenylyl group from ATP to 4'-phosphopantetheine, yielding dephospho-CoA (dPCoA) and pyrophosphate. The polypeptide is Phosphopantetheine adenylyltransferase (Histophilus somni (strain 2336) (Haemophilus somnus)).